The primary structure comprises 254 residues: Ditrans,polycis-undecaprenyl-diphosphate synthase ((2E,6E)-farnesyl-diphosphate specific) (254 aa).

Asp-25 is a catalytic residue. Asp-25 contacts Mg(2+). Residues 26 to 29, Trp-30, Arg-38, His-42, and 70 to 72 contribute to the substrate site; these read GNGR and SSE. Asn-73 (proton acceptor) is an active-site residue. Residues Trp-74, Arg-76, and Arg-193 each coordinate substrate. His-198 contributes to the Mg(2+) binding site. Position 199–201 (199–201) interacts with substrate; it reads RIS. Position 212 (Glu-212) interacts with Mg(2+).

This sequence belongs to the UPP synthase family. As to quaternary structure, homodimer. Mg(2+) serves as cofactor.

It carries out the reaction 8 isopentenyl diphosphate + (2E,6E)-farnesyl diphosphate = di-trans,octa-cis-undecaprenyl diphosphate + 8 diphosphate. Functionally, catalyzes the sequential condensation of isopentenyl diphosphate (IPP) with (2E,6E)-farnesyl diphosphate (E,E-FPP) to yield (2Z,6Z,10Z,14Z,18Z,22Z,26Z,30Z,34E,38E)-undecaprenyl diphosphate (di-trans,octa-cis-UPP). UPP is the precursor of glycosyl carrier lipid in the biosynthesis of bacterial cell wall polysaccharide components such as peptidoglycan and lipopolysaccharide. This chain is Ditrans,polycis-undecaprenyl-diphosphate synthase ((2E,6E)-farnesyl-diphosphate specific), found in Photorhabdus laumondii subsp. laumondii (strain DSM 15139 / CIP 105565 / TT01) (Photorhabdus luminescens subsp. laumondii).